Consider the following 303-residue polypeptide: Biphenyl-2,3-diol 1,2-dioxygenase (303 aa).

2 VOC domains span residues 5 to 119 and 143 to 264; these read SLGY…IYYG and GLGH…YGWS. Residues histidine 146, histidine 210, and glutamate 260 each coordinate Fe cation. The tract at residues 283-303 is disordered; sequence WGHKSVRDKALRATKHEQQPE. Basic and acidic residues predominate over residues 287 to 303; the sequence is SVRDKALRATKHEQQPE.

This sequence belongs to the extradiol ring-cleavage dioxygenase family. In terms of assembly, homooctamer. It depends on Fe(2+) as a cofactor.

It carries out the reaction biphenyl-2,3-diol + O2 = 2-hydroxy-6-oxo-6-phenylhexa-2,4-dienoate + H(+). It participates in xenobiotic degradation; biphenyl degradation; 2-hydroxy-2,4-pentadienoate and benzoate from biphenyl: step 3/4. The protein is Biphenyl-2,3-diol 1,2-dioxygenase (bphC) of Metapseudomonas furukawaii (Pseudomonas furukawaii).